The following is a 468-amino-acid chain: uncharacterized protein (468 aa).

The interval 1-22 is disordered; sequence MVKRSSHRQVVLDEDDEENYNN. Residues 85–123 form an RING-type zinc finger; it reads CPICTEALQRPFTTHCGHTYCYECLLNWLKESKSCPTCR. Positions 386–402 are enriched in low complexity; sequence DSLNSSSNNSPSHNNIH. The disordered stretch occupies residues 386–468; that stretch reads DSLNSSSNNS…TIQLDSDEES (83 aa). Positions 417 to 434 are enriched in polar residues; the sequence is IVTNGTGLRSSQSSSQNR.

It is found in the nucleus. This is an uncharacterized protein from Schizosaccharomyces pombe (strain 972 / ATCC 24843) (Fission yeast).